We begin with the raw amino-acid sequence, 402 residues long: Multidrug resistance protein MdtH (402 aa).

10 helical membrane-spanning segments follow: residues 13-33, 34-54, 99-116, 139-159, 165-185, 214-234, 244-264, 277-297, 340-360, and 368-388; these read YFLL…FPLI, SIRF…ALGL, PWIL…GTLF, LLMM…SWLL, YVCW…AWLL, VLTL…LPIM, AVKW…YPIA, LMFG…STTL, LGLA…YDMG, and LPWA…YWQF.

Belongs to the major facilitator superfamily. DHA1 family. MdtH (TC 2.A.1.2.21) subfamily.

It is found in the cell inner membrane. In Edwardsiella ictaluri (strain 93-146), this protein is Multidrug resistance protein MdtH.